The chain runs to 456 residues: Hydroxymethylglutaryl coenzyme A synthase (456 aa).

(3S)-3-hydroxy-3-methylglutaryl-CoA is bound at residue alanine 34. Glutamate 85 (proton donor/acceptor) is an active-site residue. 7 residues coordinate (3S)-3-hydroxy-3-methylglutaryl-CoA: cysteine 119, threonine 161, serine 211, histidine 258, lysine 267, asparagine 335, and serine 369. The active-site Acyl-thioester intermediate is cysteine 119. Catalysis depends on histidine 258, which acts as the Proton donor/acceptor.

The protein belongs to the thiolase-like superfamily. HMG-CoA synthase family.

It catalyses the reaction acetoacetyl-CoA + acetyl-CoA + H2O = (3S)-3-hydroxy-3-methylglutaryl-CoA + CoA + H(+). In terms of biological role, HMG-CoA synthase; part of the gene cluster that mediates the biosynthesis of 1233A, a natural compound known as an inhibitor of HMG-CoA synthase in the mevalonate pathway and with antibacterial and antifungal activities. This enzyme condenses acetyl-CoA with acetoacetyl-CoA to form HMG-CoA, which is the substrate for HMG-CoA reductase. As part of the 1233A biosynthesis cluster, is involved in conferring self-resistance to 1233A. In Fusarium sp, this protein is Hydroxymethylglutaryl coenzyme A synthase.